Consider the following 79-residue polypeptide: DNA gyrase inhibitor YacG (79 aa).

Zn(2+) contacts are provided by Cys7, Cys10, Cys26, and Cys30.

Belongs to the DNA gyrase inhibitor YacG family. In terms of assembly, interacts with GyrB. The cofactor is Zn(2+).

Its function is as follows. Inhibits all the catalytic activities of DNA gyrase by preventing its interaction with DNA. Acts by binding directly to the C-terminal domain of GyrB, which probably disrupts DNA binding by the gyrase. This Shewanella halifaxensis (strain HAW-EB4) protein is DNA gyrase inhibitor YacG.